Reading from the N-terminus, the 313-residue chain is Cytochrome c oxidase assembly protein COX18, mitochondrial (313 aa).

Residues 209–229 (SLPLDAAPMLIPIILGTVSMI) form a helical membrane-spanning segment. Residues 230–272 (NVEYNGKTMQATAVGTSGITTATDTQSRTSQTVNSILTATRLS) lie on the Mitochondrial matrix side of the membrane. The chain crosses the membrane as a helical span at residues 273-293 (TIFLIGVSTQASVLLSLYWIT). The Mitochondrial intermembrane segment spans residues 294-313 (SQVYSLIQNRILDLLWPYQR).

The protein belongs to the OXA1/ALB3/YidC family.

The protein localises to the mitochondrion inner membrane. In terms of biological role, required for the insertion of integral membrane proteins into the mitochondrial inner membrane. Essential for the activity and assembly of cytochrome c oxidase. The sequence is that of Cytochrome c oxidase assembly protein COX18, mitochondrial (COX18) from Kluyveromyces lactis (strain ATCC 8585 / CBS 2359 / DSM 70799 / NBRC 1267 / NRRL Y-1140 / WM37) (Yeast).